The following is a 129-amino-acid chain: Large ribosomal subunit protein bL19 (129 aa).

It belongs to the bacterial ribosomal protein bL19 family.

This protein is located at the 30S-50S ribosomal subunit interface and may play a role in the structure and function of the aminoacyl-tRNA binding site. The protein is Large ribosomal subunit protein bL19 of Bordetella avium (strain 197N).